Reading from the N-terminus, the 477-residue chain is Argininosuccinate lyase (477 aa).

The protein belongs to the lyase 1 family. Argininosuccinate lyase subfamily.

Its subcellular location is the cytoplasm. It carries out the reaction 2-(N(omega)-L-arginino)succinate = fumarate + L-arginine. Its pathway is amino-acid biosynthesis; L-arginine biosynthesis; L-arginine from L-ornithine and carbamoyl phosphate: step 3/3. In Corynebacterium glutamicum (strain R), this protein is Argininosuccinate lyase.